The sequence spans 24 residues: M-poneritoxin-Ng1e (24 aa).

As to expression, expressed by the venom gland.

It is found in the secreted. The protein localises to the target cell membrane. Has a broad spectrum of activity against both Gram-positive and Gram-negative bacteria and S.cerevisiae. Has insecticidal and hemolytic activities. May act by disrupting the integrity of the bacterial cell membrane. In Neoponera goeldii (Ponerine ant), this protein is M-poneritoxin-Ng1e.